A 415-amino-acid chain; its full sequence is PRKCA-binding protein (415 aa).

Residues 22–105 (KVTLQKDAQN…EVTIHYNKLQ (84 aa)) form the PDZ domain. Zn(2+) contacts are provided by Cys44 and Cys46. Thr82 carries the phosphothreonine modification. In terms of domain architecture, AH spans 144-357 (LCNDGLVKRL…CYAVLRDADV (214 aa)). A disordered region spans residues 376 to 415 (EEFTDGEEEEEEEDTAAGEPSRDTRGAAGPLDKGGSWCDS). Residues 377–391 (EFTDGEEEEEEEDTA) are compositionally biased toward acidic residues. Cys413 is lipidated: S-palmitoyl cysteine; by DHHC8.

Monomer and homodimer. Interacts with CXADR. Interacts presynaptically with the glutamate receptors GRIA2, GRIA3, GRIK3, isoform 3 of GRIA4, isoform A of GRM4, GRM7 and GRM8; with NAPA and NAPB; and with BTG2. The interaction with NAPA and NAPB disrupts the interaction with GRIA2, conducting to the internalization of GRIA2. Interacts with PRKCA; with the amine transporters SLC6A2 and SLC6A3; with the channels ASIC1 and ASIC2; with the GTP-binding proteins ARF1 and ARF3; with the ephrin receptor tyrosine kinases EPHA7, EPHB1 and EPHB2; with ERBB2 and through its PDZ domain with the C-terminal tail of PRLHR. Interacts with UNC5A. Interacts (via AH domain) with NCS1/FREQ; in a calcium-dependent manner. Interacts with F-actin and associates with the ARP2/3 complex. Interacts (via PDZ domain) with ARF1 (activated); the interaction blocks Arp2/3 complex inhibition. Interacts with SORCS3. Phosphorylation at Thr-82 appears to inhibit the interaction with AMPA receptors. Post-translationally, palmitoylation on Cys-413 is essential for long-term synaptic depression (LTD). In terms of tissue distribution, ubiquitous.

The protein resides in the cytoplasm. It localises to the perinuclear region. Its subcellular location is the membrane. The protein localises to the postsynaptic density. It is found in the synapse. The protein resides in the synaptosome. It localises to the cytoskeleton. Functionally, probable adapter protein that bind to and organize the subcellular localization of a variety of membrane proteins containing some PDZ recognition sequence. Involved in the clustering of various receptors, possibly by acting at the receptor internalization level. Plays a role in synaptic plasticity by regulating the trafficking and internalization of AMPA receptors. May be regulated upon PRKCA activation. May regulate ASIC1/ASIC3 channel. Regulates actin polymerization by inhibiting the actin-nucleating activity of the Arp2/3 complex; the function is competitive with nucleation promoting factors and is linked to neuronal morphology regulation and AMPA receptor (AMPAR) endocytosis. Via interaction with the Arp2/3 complex involved in regulation of synaptic plasicity of excitatory synapses and required for spine shrinkage during long-term depression (LTD). Involved in regulation of astrocyte morphology, antagonistic to Arp2/3 complex activator WASL/N-WASP function. The sequence is that of PRKCA-binding protein (PICK1) from Homo sapiens (Human).